The chain runs to 920 residues: Valine--tRNA ligase (920 aa).

Positions 40-50 (PNVTGTLHMGH) match the 'HIGH' region motif. The 'KMSKS' region signature appears at 522–526 (KMSKS). Lys525 contacts ATP. Coiled coils occupy residues 642–668 (EWIR…DLLA) and 849–920 (AGVI…IESL).

Belongs to the class-I aminoacyl-tRNA synthetase family. ValS type 1 subfamily. As to quaternary structure, monomer.

It is found in the cytoplasm. The catalysed reaction is tRNA(Val) + L-valine + ATP = L-valyl-tRNA(Val) + AMP + diphosphate. In terms of biological role, catalyzes the attachment of valine to tRNA(Val). As ValRS can inadvertently accommodate and process structurally similar amino acids such as threonine, to avoid such errors, it has a 'posttransfer' editing activity that hydrolyzes mischarged Thr-tRNA(Val) in a tRNA-dependent manner. In Coxiella burnetii (strain RSA 493 / Nine Mile phase I), this protein is Valine--tRNA ligase.